We begin with the raw amino-acid sequence, 371 residues long: Macronuclear solute carrier homolog CR-MSC (371 aa).

Solcar repeat units follow at residues 16-111, 120-208, and 215-304; these read RMNY…FYDK, ARPD…CKEN, and PHWI…LSQF. The next 6 helical transmembrane spans lie at 22–42, 89–109, 126–146, 184–204, 221–241, and 281–301; these read FAAANVIALITHAATQPLDMV, TFFFRTVGYTTARVTAFGYFY, VAAGVLGGFIAGVVTNPIDIV, AGANGFKLAAICSSMTNIYDW, LWGTAVAVAIGTVVSMPFDMI, and FGSFYAGGEAYFLRLFLICYL.

The protein belongs to the mitochondrial carrier (TC 2.A.29) family.

It localises to the membrane. In Oxytricha trifallax (Sterkiella histriomuscorum), this protein is Macronuclear solute carrier homolog CR-MSC.